The primary structure comprises 301 residues: Homoserine O-acetyltransferase (301 aa).

C142 functions as the Acyl-thioester intermediate in the catalytic mechanism. Substrate is bound by residues K163 and S192. H235 (proton acceptor) is an active-site residue. E237 is an active-site residue. R249 contributes to the substrate binding site.

It belongs to the MetA family.

The protein localises to the cytoplasm. The catalysed reaction is L-homoserine + acetyl-CoA = O-acetyl-L-homoserine + CoA. Its pathway is amino-acid biosynthesis; L-methionine biosynthesis via de novo pathway; O-acetyl-L-homoserine from L-homoserine: step 1/1. In terms of biological role, transfers an acetyl group from acetyl-CoA to L-homoserine, forming acetyl-L-homoserine. This Bacillus cereus (strain 03BB102) protein is Homoserine O-acetyltransferase.